A 176-amino-acid polypeptide reads, in one-letter code: MAPKAVLIGLPGSGKSTIGRRLAKALGVGFLDTDAAIEQRTGRPIAEIFATDGEREFRRIEEEVVRAALTEHDGVLSLGGGAVTSPGVREALAGHTVVYLEISATEGVRRTGGNTVRPLLAGPDRAEKYRALLAERSPLYRRAATIRVDTNRRNPGAVVRYIVSRLPATDACRAAT.

12–17 lines the ATP pocket; it reads GSGKST. Residue serine 16 participates in Mg(2+) binding. The substrate site is built by aspartate 34, arginine 58, and glycine 80. ATP is bound at residue arginine 117. Arginine 136 contributes to the substrate binding site. Arginine 153 is a binding site for ATP.

This sequence belongs to the shikimate kinase family. As to quaternary structure, monomer. The cofactor is Mg(2+).

It localises to the cytoplasm. It carries out the reaction shikimate + ATP = 3-phosphoshikimate + ADP + H(+). Its pathway is metabolic intermediate biosynthesis; chorismate biosynthesis; chorismate from D-erythrose 4-phosphate and phosphoenolpyruvate: step 5/7. In terms of biological role, catalyzes the specific phosphorylation of the 3-hydroxyl group of shikimic acid using ATP as a cosubstrate. This is Shikimate kinase from Mycobacterium avium (strain 104).